The chain runs to 376 residues: c-di-GMP synthase (376 aa).

Belongs to the CD-NTase family. G05 subfamily.

It catalyses the reaction 2 GTP = 3',3'-c-di-GMP + 2 diphosphate. In terms of biological role, cyclic nucleotide synthase (second messenger synthase) of a CBASS antivirus system. CBASS (cyclic oligonucleotide-based antiphage signaling system) provides immunity against bacteriophage. The CD-NTase protein synthesizes cyclic nucleotides in response to infection; these serve as specific second messenger signals. The signals activate a diverse range of effectors, leading to bacterial cell death and thus abortive phage infection. A type I-D CBASS(GG) system. Functionally, cyclic dinucleotide synthase that catalyzes the synthesis of c-di-GMP, has no activity with other NTP substrates. This chain is c-di-GMP synthase, found in Roseivirga ehrenbergii (strain DSM 102268 / JCM 13514 / KCTC 12282 / NCIMB 14502 / KMM 6017).